The primary structure comprises 309 residues: Small ribosomal subunit protein uS7m (309 aa).

Positions 39–86 (DSTTSSRLPPRVQIQQQQQQRTQPYSTETTPPPNSNNGDLAGIEGQPP) are disordered. Residues 51-61 (QIQQQQQQRTQ) are compositionally biased toward low complexity.

Belongs to the universal ribosomal protein uS7 family. Component of the mitochondrial small ribosomal subunit (mt-SSU). Mature N.crassa 74S mitochondrial ribosomes consist of a small (37S) and a large (54S) subunit. The 37S small subunit contains a 16S ribosomal RNA (16S mt-rRNA) and 32 different proteins. The 54S large subunit contains a 23S rRNA (23S mt-rRNA) and 42 different proteins.

Its subcellular location is the mitochondrion. Its function is as follows. Component of the mitochondrial ribosome (mitoribosome), a dedicated translation machinery responsible for the synthesis of mitochondrial genome-encoded proteins, including at least some of the essential transmembrane subunits of the mitochondrial respiratory chain. The mitoribosomes are attached to the mitochondrial inner membrane and translation products are cotranslationally integrated into the membrane. This Neurospora crassa (strain ATCC 24698 / 74-OR23-1A / CBS 708.71 / DSM 1257 / FGSC 987) protein is Small ribosomal subunit protein uS7m (rsm7).